The primary structure comprises 296 residues: 33 kDa chaperonin (296 aa).

Intrachain disulfides connect cysteine 238–cysteine 240 and cysteine 271–cysteine 274.

It belongs to the HSP33 family. In terms of processing, under oxidizing conditions two disulfide bonds are formed involving the reactive cysteines. Under reducing conditions zinc is bound to the reactive cysteines and the protein is inactive.

It localises to the cytoplasm. Redox regulated molecular chaperone. Protects both thermally unfolding and oxidatively damaged proteins from irreversible aggregation. Plays an important role in the bacterial defense system toward oxidative stress. The polypeptide is 33 kDa chaperonin (Clostridium botulinum (strain Loch Maree / Type A3)).